A 465-amino-acid chain; its full sequence is Muscarinic acetylcholine receptor M2 (465 aa).

Residues 1 to 21 (MNNSTNSSNNVALTSPYKTFE) lie on the Extracellular side of the membrane. Asn-2, Asn-3, and Asn-6 each carry an N-linked (GlcNAc...) asparagine glycan. The chain crosses the membrane as a helical span at residues 22–44 (VVFIVLVAGSLSLVTIIGNILVM). Residues 45–58 (VSIKVNRHLQTVNN) lie on the Cytoplasmic side of the membrane. A helical transmembrane segment spans residues 59–79 (YFLFSLACADLIIGVFSMNLY). Residues 80 to 96 (TLYTVIGYWPLGPVVCD) lie on the Extracellular side of the membrane. The cysteines at positions 95 and 175 are disulfide-linked. A helical membrane pass occupies residues 97 to 118 (LWLALDYVVSNASVMNLLIISF). The Important for signaling motif lies at 119 to 121 (DRY). The Cytoplasmic portion of the chain corresponds to 119-138 (DRYFCVTKPLTYPVKRTTKM). A helical transmembrane segment spans residues 139 to 161 (AGMMIAAAWVLSFILWAPAILFW). The Extracellular segment spans residues 162-183 (QFIVGVRTVEDGECYIQFFSNA). The helical transmembrane segment at 184-208 (AVTFGTAIAAFYLPVIIMTVLYWHI) threads the bilayer. Topologically, residues 209-386 (SRASKSRIKK…PPSREKKVTR (178 aa)) are cytoplasmic. The disordered stretch occupies residues 217 to 319 (KKDKKEPVAN…SVGHSKDENS (103 aa)). Residue Ser-231 is modified to Phosphoserine. Residues 253-269 (GLEHNKIQNGKTPRDAV) are compositionally biased toward basic and acidic residues. Polar residues-rich tracts occupy residues 283–292 (NDSTSVSAVA) and 303–312 (DENTVSTSVG). Residues 387 to 409 (TILAILLAFIITWAPYNVMVLIN) traverse the membrane as a helical segment. Over 410–417 (TFCAPCIP) the chain is Extracellular. Cysteines 412 and 415 form a disulfide. The chain crosses the membrane as a helical span at residues 418–441 (NTVWTIGYWLCYINSTINPACYAL). The Important for signaling motif lies at 435–439 (NPACY). The Cytoplasmic portion of the chain corresponds to 442–465 (CNATFKKTFKHLLMCHYKNIGATR). Residues Thr-445, Thr-449, and Thr-464 each carry the phosphothreonine modification.

The protein belongs to the G-protein coupled receptor 1 family. Muscarinic acetylcholine receptor subfamily. CHRM2 sub-subfamily. As to quaternary structure, interacts with ARRB1 and ARRB2. Interacts with RACK1; the interaction regulates CHRM2 internalization. In terms of processing, phosphorylated in response to agonist treatment.

The protein localises to the cell membrane. It localises to the postsynaptic cell membrane. The muscarinic acetylcholine receptor mediates various cellular responses, including inhibition of adenylate cyclase, breakdown of phosphoinositides and modulation of potassium channels through the action of G proteins. Primary transducing effect is adenylate cyclase inhibition. Signaling promotes phospholipase C activity, leading to the release of inositol trisphosphate (IP3); this then triggers calcium ion release into the cytosol. In Bos taurus (Bovine), this protein is Muscarinic acetylcholine receptor M2 (CHRM2).